The sequence spans 244 residues: Triosephosphate isomerase (244 aa).

9-11 contacts substrate; that stretch reads NWK. Histidine 93 serves as the catalytic Electrophile. Residue glutamate 160 is the Proton acceptor of the active site. Residues glycine 166 and serine 206 each contribute to the substrate site.

This sequence belongs to the triosephosphate isomerase family. In terms of assembly, homodimer.

It is found in the cytoplasm. The catalysed reaction is D-glyceraldehyde 3-phosphate = dihydroxyacetone phosphate. Its pathway is carbohydrate biosynthesis; gluconeogenesis. The protein operates within carbohydrate degradation; glycolysis; D-glyceraldehyde 3-phosphate from glycerone phosphate: step 1/1. Involved in the gluconeogenesis. Catalyzes stereospecifically the conversion of dihydroxyacetone phosphate (DHAP) to D-glyceraldehyde-3-phosphate (G3P). This is Triosephosphate isomerase from Mycoplasma pneumoniae (strain ATCC 29342 / M129 / Subtype 1) (Mycoplasmoides pneumoniae).